The chain runs to 366 residues: Transcription factor MYB61 (366 aa).

2 HTH myb-type domains span residues 9–61 and 62–116; these read KQKL…INYL and RPDL…KKKL. 2 DNA-binding regions (H-T-H motif) span residues 37–61 and 89–112; these read WSSV…INYL and WSQI…NSSI. Residues 115–164 form a disordered region; it reads KLKQRGIDPNTHKPISEVESFSDKDKPTTSNNKRSGNDHKSPSSSSATNQ. Over residues 124–141 the composition is skewed to basic and acidic residues; that stretch reads NTHKPISEVESFSDKDKP.

In terms of tissue distribution, expressed specifically in guard cells. Expressed in sink tissues, such as xylem, roots and developing seeds.

It is found in the nucleus. In terms of biological role, transcription factor that coordinates a small network of downstream target genes required for several aspects of plant growth and development, such as xylem formation and xylem cell differentiation, and lateral root formation. Regulates a specific set of target genes by binding DNA to the AC cis-element 5'-ACCTAC-3'. Functions as a transcriptional regulator of stomatal closure. Plays a role the regulation of stomatal pore size independently of abscisic acid (ABA). Required for seed coat mucilage deposition during the development of the seed coat epidermis. Involved in the induction of trichome initiation and branching by positively regulating GL1 and GL2. Required for gibberellin (GA) biosynthesis and degradation by positively affecting the expression of the enzymes that convert GA9 into the bioactive GA4, as well as the enzymes involved in the degradation of GA4. This Arabidopsis thaliana (Mouse-ear cress) protein is Transcription factor MYB61.